The sequence spans 769 residues: Serine/threonine-protein kinase PLK4 (769 aa).

The 254-residue stretch at 10–263 (YEVYEILGKG…LDQVLQHPFM (254 aa)) folds into the Protein kinase domain. Residues 16 to 24 (LGKGGFASV) and Lys39 each bind ATP. The active-site Proton acceptor is the Asp134. Disordered regions lie at residues 280 to 304 (SSDS…SSYG), 337 to 380 (PQQR…LDIP), and 592 to 651 (APLT…VLSS). The span at 337–371 (PQQRPQSASHNKPTSDFFSGISNDPRTMAPSSPTK) shows a compositional bias: polar residues. Residues 374–491 (KKRLDIPPLN…ARFVQMVKAK (118 aa)) form the Cryptic POLO box 1 (CPB1) domain. A Cryptic POLO box 2 (CPB2) domain is found at 492–595 (TPKITYYSEK…GRRPANAPLT (104 aa)). Residues 605–648 (TKENQLYSNISSPNTPQTPHQMPSFAMSTASHTSAGNPLTQRPV) are compositionally biased toward polar residues. One can recognise a POLO box domain in the interval 662–745 (AMKKCTIAGV…MPAILRELNA (84 aa)).

This sequence belongs to the protein kinase superfamily. Ser/Thr protein kinase family. CDC5/Polo subfamily. In terms of assembly, homodimer. Ubiquitinated; leading to its degradation by the proteasome.

It localises to the cytoplasm. It is found in the cytoskeleton. The protein resides in the microtubule organizing center. The protein localises to the centrosome. Its subcellular location is the centriole. The enzyme catalyses L-seryl-[protein] + ATP = O-phospho-L-seryl-[protein] + ADP + H(+). It carries out the reaction L-threonyl-[protein] + ATP = O-phospho-L-threonyl-[protein] + ADP + H(+). In terms of biological role, serine/threonine-protein kinase that plays a central role in centriole duplication. Able to trigger procentriole formation on the surface of the mother centriole cylinder, leading to the recruitment of centriole biogenesis proteins. When overexpressed, it is able to induce centrosome amplification through the simultaneous generation of multiple procentrioles adjoining each parental centriole during S phase. This is Serine/threonine-protein kinase PLK4 (SAK) from Aedes aegypti (Yellowfever mosquito).